Reading from the N-terminus, the 1060-residue chain is MPKRTDIRKIMVIGSGPIVIGQAAEFDYSGTQACLSLKEEGYQVVLVNSNPATIMTDKDIADKVYIEPITLEFVTRILRKERPDALLPTLGGQTGLNMAMALSKNGILEELNVELLGTKLSAIDKAEDRDLFKQLMEELNQPIPESEIVNSVEEAIQFAEQIGYPLIVRPAFTLGGTGGGMCDNQEQLVDITTKGLKLSPVTQCLIERSIAGFKEIEYEVMRDAADNALVVCNMENFDPVGIHTGDSIVFAPAQTLSDVENQLLRDASLDIIRALKIEGGCNVQLALDPNSFKYYVIEVNPRVSRSSALASKATGYPIAKLAAKIAVGLTLDEVINPITKTTYAMFEPALDYVVAKMPRFPFDKFESGDRKLGTQMKATGEVMAIGRNIEESLLKACRSLEIGVDHIKIADLDNVSDDVLLEKIRKAEDDRLFYLAEALRRHYSIEKLASLTSIDSFFLDKLRVIVELEDLLSKNRLDINILKKVKNKGFSDKAIASLWQINEDQVRNMRKEAGILPVYKMVDTCAAEFDSATPYFYSTYAVENESLISDKASILVLGSGPIRIGQGVEFDYATVHSVKAIRESGFEAIIMNSNPETVSTDFSISDKLYFEPLTFEDVMNVIDLEKPEGVILQFGGQTAINLAKDLNKAGVKILGTQLEDLDRAENRKQFEATLQALNIPQPPGFTATTEEEAVNAAQKIGYPVLVRPSYVLGGRAMKIVENEEDLRHYMTTAVKASPDHPVLIDAYLIGKECEVDAISDGQNILIPGIMEHIERAGVHSGDSMAVYPPQTLSETIIETIVDYTKRLAIGLNCIGMMNIQFVIKDQKVYVIEVNPRASRTLPFLSKVTHIPMAQVATKVILGDKLCNFTYGYDLYPASDMVHIKAPVFSFTKLAKVDSLLGPEMKSTGEVMGSDINLQKALYKAFEAAYLHMPDYGNIVFTVDDTDKEEALELAKVYQSIGYRIYATQGTAIYFDANGLETVLVGKLGENDRNHIPDLIKNGKIQAVINTVGQNNIDNHDALIIRRSAIEQGVPLFTSLDTAHAMFKVLESRAFTLKVLD.

The carboxyphosphate synthetic domain stretch occupies residues Met1–Glu401. Residues Arg129, Arg169, Gly175, Gly176, Arg208, Ile210, Glu215, Gly241, Ile242, His243, Gln284, and Glu298 each coordinate ATP. Residues Lys133–Val327 form the ATP-grasp 1 domain. Residues Gln284, Glu298, and Asn300 each coordinate Mg(2+). Positions 284, 298, and 300 each coordinate Mn(2+). Positions Ile402 to Ser546 are oligomerization domain. A carbamoyl phosphate synthetic domain region spans residues Leu547–Tyr929. In terms of domain architecture, ATP-grasp 2 spans Glu671 to Leu861. The ATP site is built by Arg707, Ala746, Leu748, Glu752, Gly777, Val778, His779, Ser780, Gln820, and Glu832. Positions 820, 832, and 834 each coordinate Mg(2+). Gln820, Glu832, and Asn834 together coordinate Mn(2+). Residues Leu930–Asp1060 form the MGS-like domain. The segment at Leu930–Asp1060 is allosteric domain.

It belongs to the CarB family. As to quaternary structure, composed of two chains; the small (or glutamine) chain promotes the hydrolysis of glutamine to ammonia, which is used by the large (or ammonia) chain to synthesize carbamoyl phosphate. Tetramer of heterodimers (alpha,beta)4. Mg(2+) is required as a cofactor. It depends on Mn(2+) as a cofactor.

The enzyme catalyses hydrogencarbonate + L-glutamine + 2 ATP + H2O = carbamoyl phosphate + L-glutamate + 2 ADP + phosphate + 2 H(+). It carries out the reaction hydrogencarbonate + NH4(+) + 2 ATP = carbamoyl phosphate + 2 ADP + phosphate + 2 H(+). The protein operates within amino-acid biosynthesis; L-arginine biosynthesis; carbamoyl phosphate from bicarbonate: step 1/1. It functions in the pathway pyrimidine metabolism; UMP biosynthesis via de novo pathway; (S)-dihydroorotate from bicarbonate: step 1/3. In terms of biological role, large subunit of the glutamine-dependent carbamoyl phosphate synthetase (CPSase). CPSase catalyzes the formation of carbamoyl phosphate from the ammonia moiety of glutamine, carbonate, and phosphate donated by ATP, constituting the first step of 2 biosynthetic pathways, one leading to arginine and/or urea and the other to pyrimidine nucleotides. The large subunit (synthetase) binds the substrates ammonia (free or transferred from glutamine from the small subunit), hydrogencarbonate and ATP and carries out an ATP-coupled ligase reaction, activating hydrogencarbonate by forming carboxy phosphate which reacts with ammonia to form carbamoyl phosphate. In Streptococcus agalactiae serotype Ia (strain ATCC 27591 / A909 / CDC SS700), this protein is Carbamoyl phosphate synthase large chain.